Here is a 255-residue protein sequence, read N- to C-terminus: Triosephosphate isomerase (255 aa).

Residue 9 to 11 (NWK) coordinates substrate. The Electrophile role is filled by histidine 95. Catalysis depends on glutamate 167, which acts as the Proton acceptor. Residues glycine 173, serine 212, and 233 to 234 (GG) each bind substrate.

This sequence belongs to the triosephosphate isomerase family. In terms of assembly, homodimer.

It localises to the cytoplasm. The enzyme catalyses D-glyceraldehyde 3-phosphate = dihydroxyacetone phosphate. The protein operates within carbohydrate biosynthesis; gluconeogenesis. Its pathway is carbohydrate degradation; glycolysis; D-glyceraldehyde 3-phosphate from glycerone phosphate: step 1/1. In terms of biological role, involved in the gluconeogenesis. Catalyzes stereospecifically the conversion of dihydroxyacetone phosphate (DHAP) to D-glyceraldehyde-3-phosphate (G3P). This chain is Triosephosphate isomerase, found in Sodalis glossinidius (strain morsitans).